We begin with the raw amino-acid sequence, 513 residues long: 2-isopropylmalate synthase (513 aa).

The Pyruvate carboxyltransferase domain maps to 4-268 (IKIFDTTLRD…ETGIRTELIY (265 aa)). Mn(2+) contacts are provided by aspartate 13, histidine 203, histidine 205, and asparagine 239. The regulatory domain stretch occupies residues 392-513 (RLVHFHVHTG…GLLRKNGGVE (122 aa)).

Belongs to the alpha-IPM synthase/homocitrate synthase family. LeuA type 1 subfamily. As to quaternary structure, homodimer. Mn(2+) is required as a cofactor.

The protein resides in the cytoplasm. The enzyme catalyses 3-methyl-2-oxobutanoate + acetyl-CoA + H2O = (2S)-2-isopropylmalate + CoA + H(+). The protein operates within amino-acid biosynthesis; L-leucine biosynthesis; L-leucine from 3-methyl-2-oxobutanoate: step 1/4. Its function is as follows. Catalyzes the condensation of the acetyl group of acetyl-CoA with 3-methyl-2-oxobutanoate (2-ketoisovalerate) to form 3-carboxy-3-hydroxy-4-methylpentanoate (2-isopropylmalate). This is 2-isopropylmalate synthase from Thermotoga neapolitana (strain ATCC 49049 / DSM 4359 / NBRC 107923 / NS-E).